The sequence spans 382 residues: Zinc metalloproteinase nas-7 (382 aa).

An N-terminal signal peptide occupies residues Met1–Gly18. The propeptide occupies His19–Arg79. Residues Asn80 to Pro273 form the Peptidase M12A domain. Intrachain disulfides connect Cys122–Cys272, Cys144–Cys163, Cys348–Cys382, Cys355–Cys375, and Cys362–Cys379. Residue His171 coordinates Zn(2+). Glu172 is an active-site residue. Zn(2+)-binding residues include His175 and His181. The 35-residue stretch at Cys348 to Cys382 folds into the ShKT domain.

The cofactor is Zn(2+). In terms of tissue distribution, expressed in the head of adult hermaphrodites but not within pharynx cells. Expressed in pharyngeal muscles, mc cells, intestine, hypodermal seam cells, arcade cells, spermatheca, vulva and rectal epithelial cells.

The protein localises to the secreted. Its function is as follows. Metalloprotease. This chain is Zinc metalloproteinase nas-7 (nas-7), found in Caenorhabditis elegans.